The sequence spans 683 residues: FAD-binding monooxygenase ausC (683 aa).

N-linked (GlcNAc...) asparagine glycosylation is present at Asn-5. A helical transmembrane segment spans residues 111 to 131 (ILIIGAGFGGLLFAVRLIQTG). Residues 150–153 (TWYW), 162–163 (DT), and Tyr-168 each bind FAD. 160 to 162 (MCD) serves as a coordination point for NADP(+). The N-linked (GlcNAc...) asparagine glycan is linked to Asn-286. NADP(+) is bound by residues 310-316 (TGASAVQ) and 333-334 (RT). N-linked (GlcNAc...) asparagine glycosylation is found at Asn-525 and Asn-572.

Belongs to the FAD-binding monooxygenase family. It depends on FAD as a cofactor.

It localises to the membrane. It carries out the reaction preaustinoid A + AH2 + O2 = preaustinoid A1 + A + H2O. Its pathway is secondary metabolite biosynthesis; terpenoid biosynthesis. In terms of biological role, FAD-binding monooxygenase; part of the gene cluster A that mediates the biosynthesis of austinol and dehydroaustinol, two fungal meroterpenoids. The first step of the pathway is the synthesis of 3,5-dimethylorsellinic acid by the polyketide synthase ausA. 3,5-dimethylorsellinic acid is then prenylated by the polyprenyl transferase ausN. Further epoxidation by the FAD-dependent monooxygenase ausM and cyclization by the probable terpene cyclase ausL lead to the formation of protoaustinoid A. Protoaustinoid A is then oxidized to spiro-lactone preaustinoid A3 by the combined action of the FAD-binding monooxygenases ausB and ausC, and the dioxygenase ausE. Acid-catalyzed keto-rearrangement and ring contraction of the tetraketide portion of preaustinoid A3 by ausJ lead to the formation of preaustinoid A4. The aldo-keto reductase ausK, with the help of ausH, is involved in the next step by transforming preaustinoid A4 into isoaustinone which is in turn hydroxylated by the P450 monooxygenase ausI to form austinolide. Finally, the cytochrome P450 monooxygenase ausG modifies austinolide to austinol. Austinol can be further modified to dehydroaustinol which forms a diffusible complex with diorcinol that initiates conidiation. Due to genetic rearrangements of the clusters and the subsequent loss of some enzymes, the end products of the Emericella nidulans austinoid biosynthesis clusters are austinol and dehydroaustinol, even if additional enzymes, such as the O-acetyltransferase ausQ and the cytochrome P450 monooxygenase ausR are still functional. This is FAD-binding monooxygenase ausC from Emericella nidulans (strain FGSC A4 / ATCC 38163 / CBS 112.46 / NRRL 194 / M139) (Aspergillus nidulans).